The chain runs to 1089 residues: Platelet-derived growth factor receptor alpha (1089 aa).

A signal peptide spans 1-23; that stretch reads MGTSHPAFLVLGCLLTGLSLILC. Ig-like C2-type domains are found at residues 24–113, 117–201, 202–306, 319–410, and 414–517; these read QLSL…NELE, IYIY…FQTI, PFNV…KKVT, PTFS…FELL, and PSSI…LKLV. Topologically, residues 24–528 are extracellular; sequence QLSLPSILPN…PTLRSELTVA (505 aa). N-linked (GlcNAc...) asparagine glycosylation is found at Asn-42, Asn-76, Asn-103, and Asn-179. A disulfide bridge connects residues Cys-49 and Cys-100. Intrachain disulfides connect Cys-150–Cys-189 and Cys-235–Cys-290. 4 N-linked (GlcNAc...) asparagine glycosylation sites follow: Asn-353, Asn-359, Asn-458, and Asn-468. The cysteines at positions 435 and 501 are disulfide-linked. A helical transmembrane segment spans residues 529–549; it reads AAVLVLLVIVIISLIVLVVIW. Over 550-1089 the chain is Cytoplasmic; that stretch reads KQKPRYEIRW…SSDLVEDSFL (540 aa). Tyr-572 and Tyr-574 each carry phosphotyrosine; by autocatalysis. A Protein kinase domain is found at 593–954; it reads LVLGRVLGSG…HLSEIVENLL (362 aa). Residues 599 to 607 and Lys-627 each bind ATP; that span reads LGSGAFGKV. 6 positions are modified to phosphotyrosine; by autocatalysis: Tyr-720, Tyr-731, Tyr-742, Tyr-754, Tyr-762, and Tyr-768. The Proton acceptor role is filled by Asp-818. A phosphotyrosine; by autocatalysis mark is found at Tyr-849, Tyr-988, and Tyr-1018. The disordered stretch occupies residues 1018–1089; it reads YIIPLPDIDP…SSDLVEDSFL (72 aa). Over residues 1041 to 1059 the composition is skewed to polar residues; that stretch reads SSQTSEESAIETGSSSSTF. A compositionally biased stretch (acidic residues) spans 1065-1089; sequence ETIEDIDMMDDIGIDSSDLVEDSFL.

It belongs to the protein kinase superfamily. Tyr protein kinase family. CSF-1/PDGF receptor subfamily. As to quaternary structure, interacts with homodimeric PDGFA, PDGFB and PDGFC, and with heterodimers formed by PDGFA and PDGFB. Monomer in the absence of bound ligand. Interaction with dimeric PDGFA, PDGFB and/or PDGFC leads to receptor dimerization, where both PDGFRA homodimers and heterodimers with PDGFRB are observed. Interacts (tyrosine phosphorylated) with SHB (via SH2 domain). Interacts (tyrosine phosphorylated) with SHF (via SH2 domain). Interacts (tyrosine phosphorylated) with SRC (via SH2 domain). Interacts (tyrosine phosphorylated) with PIK3R1. Interacts (tyrosine phosphorylated) with PLCG1 (via SH2 domain). Interacts (tyrosine phosphorylated) with CRK, GRB2 and GRB7. Interacts with CD248; this interaction promotes PDGF receptor signaling pathway. (Microbial infection) Interacts with human cytomegalovirus/HHV-5 envelope glycoprotein B/gB. Also interacts with the trimeric complex gH-gL-gO. Trimer-PDGFRA interaction has an inhibitory effect on PDGFRA signaling. N-glycosylated. Post-translationally, ubiquitinated, leading to its internalization and degradation. In terms of processing, autophosphorylated on tyrosine residues upon ligand binding. Autophosphorylation occurs in trans, i.e. one subunit of the dimeric receptor phosphorylates tyrosine residues on the other subunit. Phosphorylation at Tyr-731 and Tyr-742 is important for interaction with PIK3R1. Phosphorylation at Tyr-720 and Tyr-754 is important for interaction with PTPN11. Phosphorylation at Tyr-762 is important for interaction with CRK. Phosphorylation at Tyr-572 and Tyr-574 is important for interaction with SRC and SRC family members. Phosphorylation at Tyr-988 and Tyr-1018 is important for interaction with PLCG1. Detected in platelets (at protein level). Widely expressed. Detected in brain, fibroblasts, smooth muscle, heart, and embryo. Expressed in primary and metastatic colon tumors and in normal colon tissue.

Its subcellular location is the cell membrane. The protein localises to the cell projection. It localises to the cilium. It is found in the golgi apparatus. The catalysed reaction is L-tyrosyl-[protein] + ATP = O-phospho-L-tyrosyl-[protein] + ADP + H(+). Present in an inactive conformation in the absence of bound ligand. Binding of PDGFA and/or PDGFB leads to dimerization and activation by autophosphorylation on tyrosine residues. Inhibited by imatinib, nilotinib and sorafenib. In terms of biological role, tyrosine-protein kinase that acts as a cell-surface receptor for PDGFA, PDGFB and PDGFC and plays an essential role in the regulation of embryonic development, cell proliferation, survival and chemotaxis. Depending on the context, promotes or inhibits cell proliferation and cell migration. Plays an important role in the differentiation of bone marrow-derived mesenchymal stem cells. Required for normal skeleton development and cephalic closure during embryonic development. Required for normal development of the mucosa lining the gastrointestinal tract, and for recruitment of mesenchymal cells and normal development of intestinal villi. Plays a role in cell migration and chemotaxis in wound healing. Plays a role in platelet activation, secretion of agonists from platelet granules, and in thrombin-induced platelet aggregation. Binding of its cognate ligands - homodimeric PDGFA, homodimeric PDGFB, heterodimers formed by PDGFA and PDGFB or homodimeric PDGFC -leads to the activation of several signaling cascades; the response depends on the nature of the bound ligand and is modulated by the formation of heterodimers between PDGFRA and PDGFRB. Phosphorylates PIK3R1, PLCG1, and PTPN11. Activation of PLCG1 leads to the production of the cellular signaling molecules diacylglycerol and inositol 1,4,5-trisphosphate, mobilization of cytosolic Ca(2+) and the activation of protein kinase C. Phosphorylates PIK3R1, the regulatory subunit of phosphatidylinositol 3-kinase, and thereby mediates activation of the AKT1 signaling pathway. Mediates activation of HRAS and of the MAP kinases MAPK1/ERK2 and/or MAPK3/ERK1. Promotes activation of STAT family members STAT1, STAT3 and STAT5A and/or STAT5B. Receptor signaling is down-regulated by protein phosphatases that dephosphorylate the receptor and its down-stream effectors, and by rapid internalization of the activated receptor. The sequence is that of Platelet-derived growth factor receptor alpha (PDGFRA) from Homo sapiens (Human).